The sequence spans 283 residues: Homeobox protein Hox-C12b (283 aa).

A DNA-binding region (homeobox) is located at residues 215 to 274 (TRKKRKPYSKLQLNELEGEFILNEFITRQRRRELSDRLNLTDQQVKIWFQNRRMKKKRLL).

This sequence belongs to the Abd-B homeobox family.

The protein localises to the nucleus. Functionally, sequence-specific transcription factor which is part of a developmental regulatory system that provides cells with specific positional identities on the anterior-posterior axis. In Danio rerio (Zebrafish), this protein is Homeobox protein Hox-C12b (hoxc12b).